Consider the following 248-residue polypeptide: 1-(5-phosphoribosyl)-5-[(5-phosphoribosylamino)methylideneamino] imidazole-4-carboxamide isomerase (248 aa).

Aspartate 8 functions as the Proton acceptor in the catalytic mechanism. Aspartate 131 (proton donor) is an active-site residue.

This sequence belongs to the HisA/HisF family.

The protein resides in the cytoplasm. It carries out the reaction 1-(5-phospho-beta-D-ribosyl)-5-[(5-phospho-beta-D-ribosylamino)methylideneamino]imidazole-4-carboxamide = 5-[(5-phospho-1-deoxy-D-ribulos-1-ylimino)methylamino]-1-(5-phospho-beta-D-ribosyl)imidazole-4-carboxamide. Its pathway is amino-acid biosynthesis; L-histidine biosynthesis; L-histidine from 5-phospho-alpha-D-ribose 1-diphosphate: step 4/9. The protein is 1-(5-phosphoribosyl)-5-[(5-phosphoribosylamino)methylideneamino] imidazole-4-carboxamide isomerase of Cupriavidus necator (strain ATCC 17699 / DSM 428 / KCTC 22496 / NCIMB 10442 / H16 / Stanier 337) (Ralstonia eutropha).